The primary structure comprises 218 residues: MFAIISAGIAPGIALLSYFYLKDQYDNEPVHMVLRSFFLGVVLVFPIMFIQYVLEKENVGGGSFFVSFLSSGFLEESLKWFILMISVYPHAHFDEHYDGIVYGASVSLGFATLENILYLIGHGVEHAFVRALLPVSCHALIGVIMGFYLGKARFSADKARVKWLTLSLVVPSLLHGSYDFILTALSNWIYYMLPFMVFLWWFGLRKAKKARSVNMMQV.

A helical transmembrane segment spans residues 1–23; sequence MFAIISAGIAPGIALLSYFYLKD. Residues 24-30 lie on the Cytoplasmic side of the membrane; the sequence is QYDNEPV. Residues 31–53 traverse the membrane as a helical segment; the sequence is HMVLRSFFLGVVLVFPIMFIQYV. Residues 54-98 are Extracellular-facing; that stretch reads LEKENVGGGSFFVSFLSSGFLEESLKWFILMISVYPHAHFDEHYD. Residues 99-121 traverse the membrane as a helical segment; the sequence is GIVYGASVSLGFATLENILYLIG. At 122-129 the chain is on the cytoplasmic side; that stretch reads HGVEHAFV. Residues 130-151 traverse the membrane as a helical segment; the sequence is RALLPVSCHALIGVIMGFYLGK. The Extracellular segment spans residues 152 to 180; the sequence is ARFSADKARVKWLTLSLVVPSLLHGSYDF. The helical transmembrane segment at 181-203 threads the bilayer; that stretch reads ILTALSNWIYYMLPFMVFLWWFG. Residues 204–218 lie on the Cytoplasmic side of the membrane; sequence LRKAKKARSVNMMQV.

This sequence belongs to the protease PrsW family.

The protein resides in the cell membrane. Functionally, involved in the degradation of anti-sigma-W factor RsiW. Responsible for Site-1 cleavage of the RsiW anti-sigma factor. This results, after two other proteolytic steps catalyzed by the RasP and ClpXP proteases, in the release of SigW and the transcription activation of the genes under the control of the sigma-W factor. Seems to be responsible for sensing antimicrobial peptides that damage the cell membrane and other agents that cause cell envelope stress. Therefore it is a protease governing regulated intramembrane proteolysis and resistance to antimicrobial peptides in B.subtilis. This chain is Protease PrsW, found in Bacillus subtilis (strain 168).